Here is a 435-residue protein sequence, read N- to C-terminus: AP-2 complex subunit mu (435 aa).

Positions 170–434 (RNELFLDVLE…IGRSGIYETR (265 aa)) constitute an MHD domain. A 1,2-diacyl-sn-glycero-3-phospho-(1D-myo-inositol-3,4,5-trisphosphate) is bound by residues lysine 341, lysine 345, and lysine 354.

This sequence belongs to the adaptor complexes medium subunit family. As to quaternary structure, adaptor protein complex 2 (AP-2) is a heterotetramer composed of two large adaptins (alpha-type subunit and beta-type subunit), a medium adaptin (mu-type subunit) and a small adaptin (sigma-type subunit).

Its subcellular location is the cell membrane. The protein resides in the membrane. It localises to the coated pit. Functionally, component of the adaptor complexes which link clathrin to receptors in coated vesicles. Clathrin-associated protein complexes are believed to interact with the cytoplasmic tails of membrane proteins, leading to their selection and concentration. AP50 is a subunit of the plasma membrane adaptor. The complex binds polyphosphoinositide-containing lipids. The polypeptide is AP-2 complex subunit mu (ap2m1) (Xenopus tropicalis (Western clawed frog)).